Reading from the N-terminus, the 730-residue chain is Translation factor GUF1 homolog, mitochondrial (730 aa).

Residues 106-289 (ELIRNFCIIA…AVVVSIPPPK (184 aa)) enclose the tr-type G domain. GTP-binding positions include 115-122 (AHVDHGKS), 182-186 (DTPGH), and 236-239 (NKID).

Belongs to the TRAFAC class translation factor GTPase superfamily. Classic translation factor GTPase family. LepA subfamily.

The protein resides in the mitochondrion inner membrane. It carries out the reaction GTP + H2O = GDP + phosphate + H(+). In terms of biological role, promotes mitochondrial protein synthesis. May act as a fidelity factor of the translation reaction, by catalyzing a one-codon backward translocation of tRNAs on improperly translocated ribosomes. Binds to mitochondrial ribosomes in a GTP-dependent manner. The sequence is that of Translation factor GUF1 homolog, mitochondrial from Theileria annulata.